A 711-amino-acid polypeptide reads, in one-letter code: Ribosomal RNA large subunit methyltransferase K/L (711 aa).

Positions threonine 43–leucine 154 constitute a THUMP domain.

Belongs to the methyltransferase superfamily. RlmKL family.

It is found in the cytoplasm. The catalysed reaction is guanosine(2445) in 23S rRNA + S-adenosyl-L-methionine = N(2)-methylguanosine(2445) in 23S rRNA + S-adenosyl-L-homocysteine + H(+). It carries out the reaction guanosine(2069) in 23S rRNA + S-adenosyl-L-methionine = N(2)-methylguanosine(2069) in 23S rRNA + S-adenosyl-L-homocysteine + H(+). Functionally, specifically methylates the guanine in position 2445 (m2G2445) and the guanine in position 2069 (m7G2069) of 23S rRNA. This Haemophilus influenzae (strain 86-028NP) protein is Ribosomal RNA large subunit methyltransferase K/L.